The primary structure comprises 155 residues: MKAWRRLRSPRFFRFALCQQRRRRFIAIPLPDRKRKADSDNFRHLVNNVQIRIRKHAHISRVLHHDSHDADVSDRWQRFAERRARGKGARADGDRMDKRLRPDNAVDCHYICSVFVLQLFGNASDVCRIDGLPERADDGQMIRISVFQQRADERP.

This Geobacillus stearothermophilus (Bacillus stearothermophilus) protein is Protein PtsT (ptsT).